We begin with the raw amino-acid sequence, 260 residues long: Protein FAM220A (260 aa).

2 disordered regions span residues 1-75 (MKAG…SKAS) and 129-158 (GSDW…GRPG). Over residues 35 to 47 (RNPSPSVVPSWTD) the composition is skewed to polar residues.

In terms of assembly, interacts with transcriptional activator STAT3; the interaction occurs in both the nucleus and the cytoplasm, is enhanced by IL6 and promotes STAT3 dephosphorylation, leading to negative regulation of STAT3 transcriptional activator activity. Can interact with both unphosphorylated and phosphorylated STAT3 but interacts preferentially with phosphorylated STAT3 in the nucleus. Interacts with protein phosphatase PTPN2/TC45; this promotes interaction of PTPN2 with STAT3, leading to dephosphorylation of STAT3 by PTPN2. In terms of tissue distribution, expressed at high levels in the testis where it is detected within elongated spermatids during the late stages (steps 9-16) of haploid germ cell development and in the tubular lumen (at protein level).

It localises to the nucleus. The protein resides in the cytoplasm. Its subcellular location is the cytoplasmic vesicle. It is found in the secretory vesicle. The protein localises to the acrosome. Functionally, promotes dephosphorylation of transcriptional activator STAT3 by interacting with both STAT3 and protein phosphatase PTPN2. This promotes interaction of PTPN2 with STAT3 and mediates STAT3 dephosphorylation by PTPN2, leading to negative regulation of STAT3 transcriptional activator activity. May be required for spermiogenesis or sperm function. The chain is Protein FAM220A from Mus musculus (Mouse).